Consider the following 414-residue polypeptide: MIVRIYPSEISGTIKAPQSKSLAIRLIFLSLFTRIHLHNLVLSEDVIDAINSVRALGVEVKNNSEFIPPEKLEIKKKFIKLKGSGTTLRMLIPIVAAIGGEVTIDAEESLRRRPLKRIVEALSNYGISFSSSSLPLTITGKLSSYNIKISGDESSQYISGLIYALHILNGGSIEILPPISSKSYILLTVDLFNRFGSNVKFYGNKIHINPNNLVEFQGEVAGDYGLASFYALSALVSGGRTTIVNLWEPKEYFGDHSIVKILKEMGATSEYLDGKWYVEAKDKYSSIKVNIDDAPDLAMTIAGLAAIAEGTSEITGIERLRIKESDRIESIRKVLGLYGVGSEVKSNSILIFGINKRMLSSPITDCLNDHRVAMMSSALALVNGGVITSAECVSKSNPNYWQDLLSLNAKISIE.

Positions 20, 21, and 25 each coordinate 3-phosphoshikimate. K20 is a binding site for phosphoenolpyruvate. Residues G85 and R113 each coordinate phosphoenolpyruvate. Residues S154, S155, Q156, S181, D296, and K323 each coordinate 3-phosphoshikimate. Q156 serves as a coordination point for phosphoenolpyruvate. The Proton acceptor role is filled by D296. Phosphoenolpyruvate is bound by residues R327, R371, and K395.

Belongs to the EPSP synthase family. Monomer.

It localises to the cytoplasm. The catalysed reaction is 3-phosphoshikimate + phosphoenolpyruvate = 5-O-(1-carboxyvinyl)-3-phosphoshikimate + phosphate. It functions in the pathway metabolic intermediate biosynthesis; chorismate biosynthesis. Functionally, catalyzes the transfer of the enolpyruvyl moiety of phosphoenolpyruvate (PEP) to the 5-hydroxyl of shikimate-3-phosphate (S3P) to produce enolpyruvyl shikimate-3-phosphate and inorganic phosphate. In Saccharolobus islandicus (strain Y.G.57.14 / Yellowstone #1) (Sulfolobus islandicus), this protein is 3-phosphoshikimate 1-carboxyvinyltransferase.